The chain runs to 451 residues: Bifunctional protein GlmU (451 aa).

The tract at residues 1–226 (MVAVAILAAG…YLEISGINDR (226 aa)) is pyrophosphorylase. UDP-N-acetyl-alpha-D-glucosamine is bound by residues 7 to 10 (LAAG), Lys-21, Gln-73, and 78 to 79 (GT). Residue Asp-103 coordinates Mg(2+). Residues Gly-140, Glu-155, Asn-170, and Asn-224 each coordinate UDP-N-acetyl-alpha-D-glucosamine. Asn-224 provides a ligand contact to Mg(2+). Residues 227-247 (KQLATAYDILQNRIKDYWMRA) are linker. The segment at 248–451 (GVTLIDPDSI…ISGWRMKTDD (204 aa)) is N-acetyltransferase. UDP-N-acetyl-alpha-D-glucosamine is bound by residues Arg-329 and Lys-347. His-359 functions as the Proton acceptor in the catalytic mechanism. Residues Tyr-362 and Asn-373 each coordinate UDP-N-acetyl-alpha-D-glucosamine. Residues Ala-376, 382–383 (NY), Ala-419, and Arg-436 each bind acetyl-CoA.

In the N-terminal section; belongs to the N-acetylglucosamine-1-phosphate uridyltransferase family. The protein in the C-terminal section; belongs to the transferase hexapeptide repeat family. Homotrimer. It depends on Mg(2+) as a cofactor.

It is found in the cytoplasm. It carries out the reaction alpha-D-glucosamine 1-phosphate + acetyl-CoA = N-acetyl-alpha-D-glucosamine 1-phosphate + CoA + H(+). It catalyses the reaction N-acetyl-alpha-D-glucosamine 1-phosphate + UTP + H(+) = UDP-N-acetyl-alpha-D-glucosamine + diphosphate. The protein operates within nucleotide-sugar biosynthesis; UDP-N-acetyl-alpha-D-glucosamine biosynthesis; N-acetyl-alpha-D-glucosamine 1-phosphate from alpha-D-glucosamine 6-phosphate (route II): step 2/2. It participates in nucleotide-sugar biosynthesis; UDP-N-acetyl-alpha-D-glucosamine biosynthesis; UDP-N-acetyl-alpha-D-glucosamine from N-acetyl-alpha-D-glucosamine 1-phosphate: step 1/1. It functions in the pathway bacterial outer membrane biogenesis; LPS lipid A biosynthesis. In terms of biological role, catalyzes the last two sequential reactions in the de novo biosynthetic pathway for UDP-N-acetylglucosamine (UDP-GlcNAc). The C-terminal domain catalyzes the transfer of acetyl group from acetyl coenzyme A to glucosamine-1-phosphate (GlcN-1-P) to produce N-acetylglucosamine-1-phosphate (GlcNAc-1-P), which is converted into UDP-GlcNAc by the transfer of uridine 5-monophosphate (from uridine 5-triphosphate), a reaction catalyzed by the N-terminal domain. In Gloeothece citriformis (strain PCC 7424) (Cyanothece sp. (strain PCC 7424)), this protein is Bifunctional protein GlmU.